A 374-amino-acid polypeptide reads, in one-letter code: Chaperone protein DnaJ (374 aa).

A J domain is found at 5–70 (DYYEVLGVER…NKRAAYDQYG (66 aa)). A CR-type zinc finger spans residues 133–211 (GTSVNIRVPT…CHGEGRVEEY (79 aa)). Positions 146, 149, 163, 166, 185, 188, 199, and 202 each coordinate Zn(2+). CXXCXGXG motif repeat units lie at residues 146 to 153 (CKPCDGSG), 163 to 170 (CPTCGGIG), 185 to 192 (CPRCHGQG), and 199 to 206 (CDSCHGEG).

This sequence belongs to the DnaJ family. In terms of assembly, homodimer. Zn(2+) serves as cofactor.

The protein localises to the cytoplasm. In terms of biological role, participates actively in the response to hyperosmotic and heat shock by preventing the aggregation of stress-denatured proteins and by disaggregating proteins, also in an autonomous, DnaK-independent fashion. Unfolded proteins bind initially to DnaJ; upon interaction with the DnaJ-bound protein, DnaK hydrolyzes its bound ATP, resulting in the formation of a stable complex. GrpE releases ADP from DnaK; ATP binding to DnaK triggers the release of the substrate protein, thus completing the reaction cycle. Several rounds of ATP-dependent interactions between DnaJ, DnaK and GrpE are required for fully efficient folding. Also involved, together with DnaK and GrpE, in the DNA replication of plasmids through activation of initiation proteins. In Pseudomonas fluorescens (strain SBW25), this protein is Chaperone protein DnaJ.